Here is a 285-residue protein sequence, read N- to C-terminus: MAVPKIVLFYVFTPLADPEAIRLWQYTLAEANNLTGRILVSEHGINATVGGDIRDVKRYVKGTRSYAPFKDADIKWSDGLGDDFPRLSVKVRPEIVTFGAPGELKVDADGVVGGGTHLAPDEVHRLVEGRGDDVVFFDGRNGFEAEIGRFRDAVVPDVSTTREFVHELDSGKYDHLKDKAVVTYCTGGVRCEVLSSLMRSRGFGEVYQLDGGIVRYGEAFGDTGLWEGSLYVFDKRMSIEFSDQAKTLGRCSTCGGPTSRYENMPDDRGRELVLVCADCTENRAG.

The 96-residue stretch at 130–225 (RGDDVVFFDG…YGEAFGDTGL (96 aa)) folds into the Rhodanese domain. The active-site Cysteine persulfide intermediate is Cys185.

This sequence belongs to the TrhO family.

The enzyme catalyses uridine(34) in tRNA + AH2 + O2 = 5-hydroxyuridine(34) in tRNA + A + H2O. Catalyzes oxygen-dependent 5-hydroxyuridine (ho5U) modification at position 34 in tRNAs. This Rhodococcus jostii (strain RHA1) protein is tRNA uridine(34) hydroxylase.